We begin with the raw amino-acid sequence, 508 residues long: Ras association domain-containing protein 10 (508 aa).

Positions 1–133 (MDPSEKKISV…VRFVLVRSEA (133 aa)) constitute a Ras-associating domain. Disordered regions lie at residues 51–81 (RRGLTEDPSGQLELPEPPDENDEDDDDAMPP) and 186–221 (KLNRRRQQQPSSPCSSTSSSTASSCSSSARTHESAS). The segment covering 66–78 (EPPDENDEDDDDA) has biased composition (acidic residues). The span at 195 to 214 (PSSPCSSTSSSTASSCSSSA) shows a compositional bias: low complexity. Coiled coils occupy residues 235–266 (QDHTIRQQVQRLRELDREIDRYEAKVHLDRMR) and 319–358 (LEELARRCDDLVRLQEERAQQEELLERLSAEIQEELNQRW). The segment at 473 to 508 (GLAKSCPGNDEDSDTGLSSMHSQDSDSVPPVCESLV) is disordered. Over residues 487 to 498 (TGLSSMHSQDSD) the composition is skewed to polar residues.

In terms of tissue distribution, expressed in neural progenitor cells (at protein level).

Its subcellular location is the cytoplasm. It localises to the cytosol. The protein localises to the cytoskeleton. The protein resides in the microtubule organizing center. It is found in the centrosome. Its subcellular location is the spindle pole. Plays an important role in regulating embryonic neurogenesis. The sequence is that of Ras association domain-containing protein 10 (Rassf10) from Mus musculus (Mouse).